A 198-amino-acid polypeptide reads, in one-letter code: A-type ATP synthase subunit E (198 aa).

The protein belongs to the V-ATPase E subunit family. In terms of assembly, has multiple subunits with at least A(3), B(3), C, D, E, F, H, I and proteolipid K(x).

It is found in the cell membrane. Component of the A-type ATP synthase that produces ATP from ADP in the presence of a proton gradient across the membrane. The chain is A-type ATP synthase subunit E from Pyrococcus furiosus (strain ATCC 43587 / DSM 3638 / JCM 8422 / Vc1).